Here is a 270-residue protein sequence, read N- to C-terminus: ATP synthase subunit a (270 aa).

5 helical membrane passes run 37-57 (NVHI…LWVF), 98-118 (VAPL…MDLI), 143-163 (DVNI…YYSI), 217-237 (VVFI…GALP), and 239-259 (AIFH…LTIV).

Belongs to the ATPase A chain family. In terms of assembly, F-type ATPases have 2 components, CF(1) - the catalytic core - and CF(0) - the membrane proton channel. CF(1) has five subunits: alpha(3), beta(3), gamma(1), delta(1), epsilon(1). CF(0) has three main subunits: a(1), b(2) and c(9-12). The alpha and beta chains form an alternating ring which encloses part of the gamma chain. CF(1) is attached to CF(0) by a central stalk formed by the gamma and epsilon chains, while a peripheral stalk is formed by the delta and b chains.

Its subcellular location is the cell inner membrane. In terms of biological role, key component of the proton channel; it plays a direct role in the translocation of protons across the membrane. This chain is ATP synthase subunit a, found in Aliivibrio salmonicida (strain LFI1238) (Vibrio salmonicida (strain LFI1238)).